We begin with the raw amino-acid sequence, 248 residues long: Tetraspanin-18 (248 aa).

Topologically, residues 1-13 are cytoplasmic; that stretch reads MEGDCLSCMKYLM. The helical transmembrane segment at 14–34 threads the bilayer; sequence FVFNFFIFLGGACLLAIGIWV. The Extracellular portion of the chain corresponds to 35–49; that stretch reads MVDPTGFREIVAANP. The helical transmembrane segment at 50 to 70 threads the bilayer; the sequence is LLLTGAYILLAMGGLLFLLGF. Over 71-83 the chain is Cytoplasmic; that stretch reads LGCCGAVRENKCL. Residues 84-104 form a helical membrane-spanning segment; it reads LLFFFLFILIIFLAELSAAIL. At 105–223 the chain is on the extracellular side; the sequence is AFIFRENLTR…TFETYVYLAG (119 aa). N111 and N129 each carry an N-linked (GlcNAc...) asparagine glycan. The chain crosses the membrane as a helical span at residues 224–244; the sequence is ALAIGVLAIELFAMIFAMCLF. Residues 245–248 lie on the Cytoplasmic side of the membrane; that stretch reads RGIQ.

The protein belongs to the tetraspanin (TM4SF) family. As to quaternary structure, interacts with ORAI1; this interaction regulates ORAI1 exit from the endoplasmic (ER), and/or Golgi, and trafficking to the cell surface. In terms of tissue distribution, highly expressed in primary endothelial cells. Expressed in the embryo heart. Weakly expressed the embryo skeletal muscle.

Its subcellular location is the membrane. Its function is as follows. Plays a role in the cell surface localization of ORAI1 and may participate in the regulation of Ca(2+) signaling and the VWF release in response to inflammatory stimuli. The chain is Tetraspanin-18 from Homo sapiens (Human).